The chain runs to 593 residues: SPI-1 type 3 secretion system translocon protein SctE (593 aa).

2 coiled-coil regions span residues 151 to 208 and 287 to 314; these read DTAK…ATDA and EGRQ…NRIM. Helical transmembrane passes span 330 to 350 and 409 to 429; these read VVAA…GLAV and IVGA…VAVV.

Belongs to the SctE/SipB/YopB family. As to quaternary structure, the core secretion machinery of the T3SS is composed of approximately 20 different proteins, including cytoplasmic components, a base, an export apparatus and a needle. This subunit is involved in the formation of a pore, called the translocon, in host membrane.

The protein localises to the secreted. It is found in the host membrane. The protein resides in the host cell. Component of the type III secretion system 1 (SPI-1 T3SS), also called injectisome, which is used to inject bacterial effector proteins into eukaryotic host cells. SipB/SctE1 and SipC/SctB are inserted into the host membrane where they form a pore and allow the translocation of effector proteins into the cytosol of target cells. Functionally, induces macrophage apoptosis either by binding and activating the proapoptotic enzyme caspase-1 (caspase-1 dependent), resulting in the release of interleukin-1 beta active form, or by disrupting mitochondria and inducing autophagy (caspase-1 independent). The former is dependent of its membrane-fusion activity. In Salmonella typhi, this protein is SPI-1 type 3 secretion system translocon protein SctE.